The chain runs to 520 residues: Cytochrome b5 reductase 4 (520 aa).

At Met1 the chain carries N-acetylmethionine. The segment at 1–27 is disordered; sequence MLNVPSQAFPAPGSQQRVASQGRSKVP. Positions 13-23 are enriched in polar residues; that stretch reads GSQQRVASQGR. The region spanning 54–130 is the Cytochrome b5 heme-binding domain; that stretch reads LIEVTEEELK…LKECLVGRMA (77 aa). Positions 89 and 112 each coordinate heme. The 92-residue stretch at 164 to 255 folds into the CS domain; it reads PSSPSYDWFQ…KETVSWKCLG (92 aa). One can recognise an FAD-binding FR-type domain in the interval 272–384; that stretch reads LYYRQCQLIS…SGPEGNFKVS (113 aa). FAD-binding positions include 364–379 and 391–423; these read DRLQIGDFVSVSGPEG and DLFLLAAGTGFTPMVTVLNHALTHMSSLRKVKL.

The protein belongs to the flavoprotein pyridine nucleotide cytochrome reductase family. FAD serves as cofactor. Isoform 2 is expressed in testis, brain, skeletal muscle and in the male germline.

It localises to the endoplasmic reticulum. The enzyme catalyses 2 Fe(III)-[cytochrome b5] + NADH = 2 Fe(II)-[cytochrome b5] + NAD(+) + H(+). Functionally, NADH-cytochrome b5 reductase involved in endoplasmic reticulum stress response pathway. Plays a critical role in protecting pancreatic beta-cells against oxidant stress, possibly by protecting the cell from excess buildup of reactive oxygen species (ROS). The protein is Cytochrome b5 reductase 4 (Cyb5r4) of Rattus norvegicus (Rat).